Here is a 308-residue protein sequence, read N- to C-terminus: Probable GTP 3',8-cyclase (308 aa).

The region spanning 4 to 224 (RFGRPLEDLR…QIRKKHFRPR (221 aa)) is the Radical SAM core domain. Residue Arg13 participates in GTP binding. Residues Cys20, Cys24, and Cys27 each contribute to the [4Fe-4S] cluster site. Lys60 is a GTP binding site. Position 64 (Gly64) interacts with S-adenosyl-L-methionine. Thr90 lines the GTP pocket. Residue Ser114 coordinates S-adenosyl-L-methionine. Residue Lys151 participates in GTP binding. [4Fe-4S] cluster is bound by residues Cys245 and Cys248. 250-252 (RIR) contributes to the GTP binding site. Cys262 lines the [4Fe-4S] cluster pocket.

It belongs to the radical SAM superfamily. MoaA family. It depends on [4Fe-4S] cluster as a cofactor.

It carries out the reaction GTP + AH2 + S-adenosyl-L-methionine = (8S)-3',8-cyclo-7,8-dihydroguanosine 5'-triphosphate + 5'-deoxyadenosine + L-methionine + A + H(+). It participates in cofactor biosynthesis; molybdopterin biosynthesis. Catalyzes the cyclization of GTP to (8S)-3',8-cyclo-7,8-dihydroguanosine 5'-triphosphate. This chain is Probable GTP 3',8-cyclase, found in Saccharolobus islandicus (strain L.S.2.15 / Lassen #1) (Sulfolobus islandicus).